A 37-amino-acid polypeptide reads, in one-letter code: Large ribosomal subunit protein bL36 (37 aa).

Belongs to the bacterial ribosomal protein bL36 family.

In Marinomonas sp. (strain MWYL1), this protein is Large ribosomal subunit protein bL36.